Consider the following 142-residue polypeptide: Dromaiocalcin-2 (142 aa).

3 disulfide bridges follow: cysteine 6–cysteine 17, cysteine 34–cysteine 138, and cysteine 113–cysteine 130. The 127-residue stretch at phenylalanine 13–alanine 139 folds into the C-type lectin domain. Phosphoserine occurs at positions 62 and 68.

Post-translationally, a minor form with some unmodified Ser-68 and partial phosphorylation of Ser-66 may also occur.

The protein localises to the secreted. Its subcellular location is the extracellular space. It is found in the extracellular matrix. The sequence is that of Dromaiocalcin-2 from Dromaius novaehollandiae (Emu).